The primary structure comprises 233 residues: Large ribosomal subunit protein bL25 (233 aa).

The disordered stretch occupies residues 1-23; that stretch reads MATVRELKATARPKSGKGAARAE.

It belongs to the bacterial ribosomal protein bL25 family. CTC subfamily. Part of the 50S ribosomal subunit; part of the 5S rRNA/L5/L18/L25 subcomplex. Contacts the 5S rRNA. Binds to the 5S rRNA independently of L5 and L18.

This is one of the proteins that binds to the 5S RNA in the ribosome where it forms part of the central protuberance. This is Large ribosomal subunit protein bL25 from Nitrobacter hamburgensis (strain DSM 10229 / NCIMB 13809 / X14).